The following is an 87-amino-acid chain: Small ribosomal subunit protein bS20 (87 aa).

The interval M1–K22 is disordered.

This sequence belongs to the bacterial ribosomal protein bS20 family.

Functionally, binds directly to 16S ribosomal RNA. This chain is Small ribosomal subunit protein bS20, found in Geobacter metallireducens (strain ATCC 53774 / DSM 7210 / GS-15).